A 749-amino-acid polypeptide reads, in one-letter code: Replication restart protein PriA (749 aa).

The 168-residue stretch at 224-391 folds into the Helicase ATP-binding domain; that stretch reads SLKTSQFHTH…LSGKYVLSRL (168 aa). ATP is bound at residue 237–244; that stretch reads GITGSGKT. The DEAH box signature appears at 333 to 336; that stretch reads DEEH. Residues C454, C457, C463, C466, C481, C484, C495, and C498 each coordinate Zn(2+). One can recognise a Helicase C-terminal domain in the interval 490-658; that stretch reads DLPQSCPKCL…EYPPFIRLIR (169 aa).

Belongs to the helicase family. PriA subfamily. As to quaternary structure, component of the replication restart primosome. It depends on Zn(2+) as a cofactor.

It catalyses the reaction Couples ATP hydrolysis with the unwinding of duplex DNA by translocating in the 3'-5' direction.. The catalysed reaction is ATP + H2O = ADP + phosphate + H(+). In terms of biological role, initiates the restart of stalled replication forks, which reloads the replicative helicase on sites other than the origin of replication. Recognizes and binds to abandoned replication forks and remodels them to uncover a helicase loading site. Promotes assembly of the primosome at these replication forks. In Chlamydia pneumoniae (Chlamydophila pneumoniae), this protein is Replication restart protein PriA.